Consider the following 387-residue polypeptide: 3-ketoacyl-CoA thiolase (387 aa).

Cysteine 91 acts as the Acyl-thioester intermediate in catalysis. Catalysis depends on proton acceptor residues histidine 343 and cysteine 373.

This sequence belongs to the thiolase-like superfamily. Thiolase family. Heterotetramer of two alpha chains (FadB) and two beta chains (FadA).

The protein resides in the cytoplasm. It carries out the reaction an acyl-CoA + acetyl-CoA = a 3-oxoacyl-CoA + CoA. It participates in lipid metabolism; fatty acid beta-oxidation. Its function is as follows. Catalyzes the final step of fatty acid oxidation in which acetyl-CoA is released and the CoA ester of a fatty acid two carbons shorter is formed. The polypeptide is 3-ketoacyl-CoA thiolase (Escherichia coli O9:H4 (strain HS)).